The following is a 317-amino-acid chain: Aspartate carbamoyltransferase catalytic subunit (317 aa).

The carbamoyl phosphate site is built by Arg-66 and Thr-67. Lys-94 contributes to the L-aspartate binding site. Carbamoyl phosphate is bound by residues Arg-116, His-144, and Gln-147. L-aspartate-binding residues include Arg-177 and Arg-231. Residues Gly-272 and Pro-273 each contribute to the carbamoyl phosphate site.

This sequence belongs to the aspartate/ornithine carbamoyltransferase superfamily. ATCase family. As to quaternary structure, heterododecamer (2C3:3R2) of six catalytic PyrB chains organized as two trimers (C3), and six regulatory PyrI chains organized as three dimers (R2).

The catalysed reaction is carbamoyl phosphate + L-aspartate = N-carbamoyl-L-aspartate + phosphate + H(+). Its pathway is pyrimidine metabolism; UMP biosynthesis via de novo pathway; (S)-dihydroorotate from bicarbonate: step 2/3. Functionally, catalyzes the condensation of carbamoyl phosphate and aspartate to form carbamoyl aspartate and inorganic phosphate, the committed step in the de novo pyrimidine nucleotide biosynthesis pathway. The chain is Aspartate carbamoyltransferase catalytic subunit from Beijerinckia indica subsp. indica (strain ATCC 9039 / DSM 1715 / NCIMB 8712).